The sequence spans 1283 residues: 5-oxoprolinase PfmaA (1283 aa).

Positions Asn1256 to Ile1283 are disordered. The segment covering Pro1266–Asp1277 has biased composition (basic and acidic residues).

Belongs to the oxoprolinase family. Homodimer.

The catalysed reaction is 5-oxo-L-proline + ATP + 2 H2O = L-glutamate + ADP + phosphate + H(+). 5-oxoprolinase; part of the gene cluster that mediates the biosynthesis of dihydroxynaphthalene (DHN)-melanin, a bluish-green pigment forming a dark layer in the conidial wall that protects the conidia from UV radiations. The first step of the pathway is the production of the pentaketide 1,3,6,8-tetrahydroxynaphthalene (1,3,6,8-THN or T4HN) by the polyketide synthase PfmaE though condensation of acetyl-CoA with malonyl-CoA. T4HN is not stable and easily oxidizes into the stable form flaviolin. T4HN is also substrate of the hydroxynaphthalene reductase PfmaG to yield scytalone. The scytalone dehydratase PfmaJ then reduces scytalone to 1,3,8-THN. 1,3,8-THN is then substrate of the hydroxynaphthalene reductase PfmaI to yield vermelone. Vermelone is further converted by the multicopper oxidase PfmaD to 1,8-DHN. Finally the laccase PFICI_06862 transforms 1,8-DHN to DHN-melanin. The roles of the 5-oxoprolinase PfmaA and the proline iminopeptidase PfmaB within the cluster have not been elucidated yet. The protein is 5-oxoprolinase PfmaA of Pestalotiopsis fici (strain W106-1 / CGMCC3.15140).